We begin with the raw amino-acid sequence, 1400 residues long: DNA-directed RNA polymerase subunit beta' (1400 aa).

Positions 70, 72, 85, and 88 each coordinate Zn(2+). 3 residues coordinate Mg(2+): aspartate 460, aspartate 462, and aspartate 464. Residues cysteine 814, cysteine 888, cysteine 895, and cysteine 898 each coordinate Zn(2+). Positions 1367-1400 (DRQAKRAEAQEGPSAEQATDNLAALLNAGFSSDE) are disordered.

This sequence belongs to the RNA polymerase beta' chain family. In terms of assembly, the RNAP catalytic core consists of 2 alpha, 1 beta, 1 beta' and 1 omega subunit. When a sigma factor is associated with the core the holoenzyme is formed, which can initiate transcription. Requires Mg(2+) as cofactor. It depends on Zn(2+) as a cofactor.

It carries out the reaction RNA(n) + a ribonucleoside 5'-triphosphate = RNA(n+1) + diphosphate. Functionally, DNA-dependent RNA polymerase catalyzes the transcription of DNA into RNA using the four ribonucleoside triphosphates as substrates. The sequence is that of DNA-directed RNA polymerase subunit beta' from Vibrio campbellii (strain ATCC BAA-1116).